A 459-amino-acid polypeptide reads, in one-letter code: Putrescine aminotransferase (459 aa).

Pyridoxal 5'-phosphate-binding positions include 150–151 (GT) and Gln-274. The residue at position 300 (Lys-300) is an N6-(pyridoxal phosphate)lysine. Thr-332 contacts pyridoxal 5'-phosphate.

It belongs to the class-III pyridoxal-phosphate-dependent aminotransferase family. Putrescine aminotransferase subfamily. Pyridoxal 5'-phosphate serves as cofactor.

It catalyses the reaction an alkane-alpha,omega-diamine + 2-oxoglutarate = an omega-aminoaldehyde + L-glutamate. The enzyme catalyses putrescine + 2-oxoglutarate = 1-pyrroline + L-glutamate + H2O. The catalysed reaction is cadaverine + 2-oxoglutarate = 5-aminopentanal + L-glutamate. The protein operates within amine and polyamine degradation; putrescine degradation; 4-aminobutanal from putrescine (transaminase route): step 1/1. Its function is as follows. Catalyzes the aminotransferase reaction from putrescine to 2-oxoglutarate, leading to glutamate and 4-aminobutanal, which spontaneously cyclizes to form 1-pyrroline. This is the first step in one of two pathways for putrescine degradation, where putrescine is converted into 4-aminobutanoate (gamma-aminobutyrate or GABA) via 4-aminobutanal. Also functions as a cadaverine transaminase in a a L-lysine degradation pathway to succinate that proceeds via cadaverine, glutarate and L-2-hydroxyglutarate. This Shigella flexneri serotype 5b (strain 8401) protein is Putrescine aminotransferase.